Consider the following 678-residue polypeptide: Electrogenic aspartate/glutamate antiporter SLC25A12, mitochondrial (678 aa).

N-acetylalanine is present on Ala-2. Positions 2 to 294 are regulatory N-terminal domain; it reads AVKVQTTKRG…TLADIERIAP (293 aa). Over 2-329 the chain is Mitochondrial intermembrane; that stretch reads AVKVQTTKRG…WLQIAESAYR (328 aa). Positions 65, 67, 69, 71, and 76 each coordinate Ca(2+). 4 consecutive EF-hand domains span residues 65 to 76, 86 to 121, 125 to 155, and 157 to 192; these read DQTKDGLISYQE, APDS…TIIH, PFNW…QFLQ, and LQLE…IRSH. The tract at residues 295 to 310 is linker loop domain; the sequence is LAEGALPYNLAELQRQ. The tract at residues 320 to 612 is carrier domain; that stretch reads WLQIAESAYR…RWFYIDFGGL (293 aa). Solcar repeat units lie at residues 324–416, 424–508, and 516–604; these read AESA…VRDK, VPLP…CKLL, and VGGL…LQRW. Residues 330-347 traverse the membrane as a helical segment; it reads FTLGSVAGAVGATAVYPI. At 348–390 the chain is on the mitochondrial matrix side; the sequence is DLVKTRMQNQRGSGSVVGELMYKNSFDCFKKVLRYEGFFGLYR. A helical transmembrane segment spans residues 391–410; sequence GLIPQLIGVAPEKAIKLTVN. At 411–433 the chain is on the mitochondrial intermembrane side; the sequence is DFVRDKFTRRDGSVPLPAEVLAG. Residues 434 to 447 traverse the membrane as a helical segment; the sequence is GCAGGSQVIFTNPL. The Mitochondrial matrix portion of the chain corresponds to 448 to 482; sequence EIVKIRLQVAGEITTGPRVSALNVLRDLGIFGLYK. A helical transmembrane segment spans residues 483-502; that stretch reads GAKACFLRDIPFSAIYFPVY. The Mitochondrial intermembrane segment spans residues 503–521; sequence AHCKLLLADENGHVGGLNL. A helical membrane pass occupies residues 522 to 539; it reads LAAGAMAGVPAASLVTPA. The Mitochondrial matrix segment spans residues 540–578; it reads DVIKTRLQVAARAGQTTYSGVIDCFRKILREEGPSAFWK. Residues 579-598 form a helical membrane-spanning segment; that stretch reads GTAARVFRSSPQFGVTLVTY. The Mitochondrial intermembrane segment spans residues 599–678; the sequence is ELLQRWFYID…QPKAAVAATQ (80 aa). The tract at residues 613 to 675 is C-terminal domain; that stretch reads KPAGSEPTPK…AVVQPKAAVA (63 aa).

Belongs to the mitochondrial carrier (TC 2.A.29) family. Homodimer (via N-terminus). Expressed predominantly in the heart and skeletal muscle, weakly in brain and kidney.

The protein localises to the mitochondrion inner membrane. It catalyses the reaction L-aspartate(in) + L-glutamate(out) + H(+)(out) = L-aspartate(out) + L-glutamate(in) + H(+)(in). It carries out the reaction 3-sulfino-L-alanine(out) + L-glutamate(in) + H(+)(in) = 3-sulfino-L-alanine(in) + L-glutamate(out) + H(+)(out). The catalysed reaction is 3-sulfino-L-alanine(out) + L-aspartate(in) = 3-sulfino-L-alanine(in) + L-aspartate(out). Activated by calcium-binding in the mitochondrial intermembrane space. Inhibited by pyridoxal 5'-phosphate, bathophenathroline, mercurials, diethyl pyrocarbonate and N-ethylmaleimide. Mitochondrial electrogenic aspartate/glutamate antiporter that favors efflux of aspartate and entry of glutamate and proton within the mitochondria as part of the malate-aspartate shuttle. Also mediates the uptake of L-cysteinesulfinate (3-sulfino-L-alanine) by mitochondria in exchange of L-glutamate and proton. Can also exchange L-cysteinesulfinate with aspartate in their anionic form without any proton translocation. Lacks transport activity towards L-glutamine or gamma-aminobutyric acid (GABA). This Homo sapiens (Human) protein is Electrogenic aspartate/glutamate antiporter SLC25A12, mitochondrial.